Here is a 264-residue protein sequence, read N- to C-terminus: Thymidylate synthase (264 aa).

R21 is a binding site for dUMP. H51 contacts (6R)-5,10-methylene-5,6,7,8-tetrahydrofolate. 126–127 lines the dUMP pocket; the sequence is RR. C146 serves as the catalytic Nucleophile. Residues 166–169, N177, and 207–209 each bind dUMP; these read RSAD and HIY. (6R)-5,10-methylene-5,6,7,8-tetrahydrofolate is bound at residue D169. A263 provides a ligand contact to (6R)-5,10-methylene-5,6,7,8-tetrahydrofolate.

It belongs to the thymidylate synthase family. Bacterial-type ThyA subfamily. Homodimer.

Its subcellular location is the cytoplasm. The catalysed reaction is dUMP + (6R)-5,10-methylene-5,6,7,8-tetrahydrofolate = 7,8-dihydrofolate + dTMP. It functions in the pathway pyrimidine metabolism; dTTP biosynthesis. Its function is as follows. Catalyzes the reductive methylation of 2'-deoxyuridine-5'-monophosphate (dUMP) to 2'-deoxythymidine-5'-monophosphate (dTMP) while utilizing 5,10-methylenetetrahydrofolate (mTHF) as the methyl donor and reductant in the reaction, yielding dihydrofolate (DHF) as a by-product. This enzymatic reaction provides an intracellular de novo source of dTMP, an essential precursor for DNA biosynthesis. This is Thymidylate synthase from Rhizobium meliloti (strain 1021) (Ensifer meliloti).